We begin with the raw amino-acid sequence, 406 residues long: Transposase for insertion sequence element IS1001 (406 aa).

The protein belongs to the transposase 12 family.

Involved in the transposition of the insertion sequence. The chain is Transposase for insertion sequence element IS1001 (tnpA) from Bordetella parapertussis.